The sequence spans 395 residues: Flavohemoprotein (395 aa).

The region spanning 1-136 is the Globin domain; that stretch reads MLDQQTIATI…LANVFIQRES (136 aa). A heme b-binding site is contributed by His85. Catalysis depends on charge relay system residues Tyr95 and Glu135. The tract at residues 147–395 is reductase; sequence GGWHGIRPFR…YECFGPHKVI (249 aa). Residues 150–255 enclose the FAD-binding FR-type domain; sequence HGIRPFRIVA…AAPHGDFYLE (106 aa). FAD contacts are provided by residues Tyr188 and 204–207; that span reads RQYS. Residue 268-273 participates in NADP(+) binding; it reads GVGQTP. Residue 388 to 391 coordinates FAD; that stretch reads CFGP.

The protein belongs to the globin family. Two-domain flavohemoproteins subfamily. In the C-terminal section; belongs to the flavoprotein pyridine nucleotide cytochrome reductase family. Heme b is required as a cofactor. The cofactor is FAD.

The protein resides in the cytoplasm. It catalyses the reaction 2 nitric oxide + NADPH + 2 O2 = 2 nitrate + NADP(+) + H(+). The catalysed reaction is 2 nitric oxide + NADH + 2 O2 = 2 nitrate + NAD(+) + H(+). Its function is as follows. Is involved in NO detoxification in an aerobic process, termed nitric oxide dioxygenase (NOD) reaction that utilizes O(2) and NAD(P)H to convert NO to nitrate, which protects the bacterium from various noxious nitrogen compounds. Therefore, plays a central role in the inducible response to nitrosative stress. The chain is Flavohemoprotein (hmp) from Dickeya dadantii (strain 3937) (Erwinia chrysanthemi (strain 3937)).